Consider the following 891-residue polypeptide: Protein SEY1 homolog (891 aa).

Residues 1-754 are Cytoplasmic-facing; it reads MNLHLVDSDG…LRAAEAGNQR (754 aa). The region spanning 52–318 is the GB1/RHD3-type G domain; that stretch reads GLNYHVVGVF…RCSDYLFSYH (267 aa). A GTP-binding site is contributed by 62–69; the sequence is GGQSSGKS. The chain crosses the membrane as a helical span at residues 755-775; the sequence is LPAWVIPALFILGWNELLYVL. Residues 776–778 are Lumenal-facing; that stretch reads TSP. The chain crosses the membrane as a helical span at residues 779–799; it reads ALLVLVVVICAVFFRQFFVSQ. The Cytoplasmic segment spans residues 800–891; the sequence is WHAFEETGPA…MRHRTTHKLD (92 aa). Over residues 863-880 the composition is skewed to polar residues; the sequence is STHADPAPSNTTVPTAQA. The interval 863–891 is disordered; that stretch reads STHADPAPSNTTVPTAQATMRHRTTHKLD. The span at 882-891 shows a compositional bias: basic residues; the sequence is MRHRTTHKLD.

Belongs to the TRAFAC class dynamin-like GTPase superfamily. GB1/RHD3 GTPase family. RHD3 subfamily.

The protein localises to the endoplasmic reticulum membrane. In terms of biological role, probable GTP-binding protein that may be involved in cell development. This is Protein SEY1 homolog from Leishmania braziliensis.